The primary structure comprises 195 residues: CD70 antigen (195 aa).

The Cytoplasmic segment spans residues 1 to 23; the sequence is MPEEGRPCPWVRWSGTAFQRQWP. Residues 24–44 traverse the membrane as a helical; Signal-anchor for type II membrane protein segment; the sequence is WLLLVVFITVFCCWFHCSGLL. Residues 45–195 are Extracellular-facing; that stretch reads SKQQQRLLEH…TFFGVQWICP (151 aa). Residues 58–193 enclose the THD domain; sequence HTAELQLNLT…DETFFGVQWI (136 aa). N-linked (GlcNAc...) asparagine glycosylation is found at asparagine 65 and asparagine 116. Intrachain disulfides connect cysteine 117–cysteine 153 and cysteine 135–cysteine 170. An N-linked (GlcNAc...) asparagine glycan is attached at asparagine 172.

Belongs to the tumor necrosis factor family. Homotrimer. Post-translationally, N-glycosylated. In terms of tissue distribution, very low level of expression. Detected in splenocytes and thymocytes.

Its subcellular location is the cell membrane. Functionally, expressed at the plasma membrane of B cells, it is the ligand of the CD27 receptor which is specifically expressed at the surface of T cells. The CD70-CD27 signaling pathway mediates antigen-specific T cell activation and expansion which in turn provides immune surveillance of B cells. The polypeptide is CD70 antigen (Mus musculus (Mouse)).